A 270-amino-acid polypeptide reads, in one-letter code: tRNA pseudouridine synthase A (270 aa).

The Nucleophile role is filled by aspartate 51. Tyrosine 109 lines the substrate pocket.

It belongs to the tRNA pseudouridine synthase TruA family. Homodimer.

It carries out the reaction uridine(38/39/40) in tRNA = pseudouridine(38/39/40) in tRNA. In terms of biological role, formation of pseudouridine at positions 38, 39 and 40 in the anticodon stem and loop of transfer RNAs. The polypeptide is tRNA pseudouridine synthase A (Burkholderia vietnamiensis (strain G4 / LMG 22486) (Burkholderia cepacia (strain R1808))).